The primary structure comprises 42 residues: uncharacterized protein (42 aa).

The chain crosses the membrane as a helical span at residues 10 to 30 (VANWVTVILMALAGYAVLALA).

The protein localises to the host membrane. This is an uncharacterized protein from Acinetobacter calcoaceticus (Arthrobacter siderocapsulatus).